Reading from the N-terminus, the 349-residue chain is Protein-glutamate methylesterase/protein-glutamine glutaminase (349 aa).

The Response regulatory domain maps to 5–122 (KVLVVDDSAF…SLDLYKVKDE (118 aa)). D56 is modified (4-aspartylphosphate). In terms of domain architecture, CheB-type methylesterase spans 156 to 349 (ARPQQAIVAI…AAAIVQLIGE (194 aa)). Active-site residues include S168, H195, and D291.

This sequence belongs to the CheB family. Post-translationally, phosphorylated by CheA. Phosphorylation of the N-terminal regulatory domain activates the methylesterase activity.

Its subcellular location is the cytoplasm. The catalysed reaction is [protein]-L-glutamate 5-O-methyl ester + H2O = L-glutamyl-[protein] + methanol + H(+). It catalyses the reaction L-glutaminyl-[protein] + H2O = L-glutamyl-[protein] + NH4(+). Functionally, involved in chemotaxis. Part of a chemotaxis signal transduction system that modulates chemotaxis in response to various stimuli. Catalyzes the demethylation of specific methylglutamate residues introduced into the chemoreceptors (methyl-accepting chemotaxis proteins or MCP) by CheR. Also mediates the irreversible deamidation of specific glutamine residues to glutamic acid. The chain is Protein-glutamate methylesterase/protein-glutamine glutaminase from Geobacillus kaustophilus (strain HTA426).